The sequence spans 397 residues: uncharacterized protein (397 aa).

Transmembrane regions (helical) follow at residues 62–79 (VLLFGILIFSIFVALIAI), 92–109 (WYGLLAFGVLTSLELVVT), 135–154 (VVFLPLICVYSLSILYSTLS), and 167–189 (AFLKTMLFTLLICSFILNFFPGI).

It is found in the cell membrane. This is an uncharacterized protein from Archaeoglobus fulgidus (strain ATCC 49558 / DSM 4304 / JCM 9628 / NBRC 100126 / VC-16).